A 363-amino-acid chain; its full sequence is Aminomethyltransferase (363 aa).

This sequence belongs to the GcvT family. In terms of assembly, the glycine cleavage system is composed of four proteins: P, T, L and H.

It carries out the reaction N(6)-[(R)-S(8)-aminomethyldihydrolipoyl]-L-lysyl-[protein] + (6S)-5,6,7,8-tetrahydrofolate = N(6)-[(R)-dihydrolipoyl]-L-lysyl-[protein] + (6R)-5,10-methylene-5,6,7,8-tetrahydrofolate + NH4(+). In terms of biological role, the glycine cleavage system catalyzes the degradation of glycine. In Staphylococcus haemolyticus (strain JCSC1435), this protein is Aminomethyltransferase.